Here is a 274-residue protein sequence, read N- to C-terminus: MQNITQSWFVQGMIKATTDAWLKGWDERNGGNLTLRLDDADIALYHDNFHPQPRYIPLSQPMPLLANTPFIVTGSGKFFRNVQLDPAANLGVVKVDSDGAGYHILWGLTNEAVPTSELPAHFLSHCERIKATNGKDRVIMHCHATNLIALTYVLENDTAVFTRQLWEGSTECLVVFPDGVGILPWMVPGTDEIGQATAQEMQKHSLVLWPFHGVFGSGPTLDETFGLIDTAEKSAEVLVKVYSMGGMKQTISREELIALGQRFGVTPLASALAL.

Glu117 is a catalytic residue. 3 residues coordinate Zn(2+): His141, His143, and His212.

This sequence belongs to the aldolase class II family. RhaD subfamily. In terms of assembly, homotetramer. Zn(2+) serves as cofactor.

It localises to the cytoplasm. The enzyme catalyses L-rhamnulose 1-phosphate = (S)-lactaldehyde + dihydroxyacetone phosphate. It functions in the pathway carbohydrate degradation; L-rhamnose degradation; glycerone phosphate from L-rhamnose: step 3/3. Catalyzes the reversible cleavage of L-rhamnulose-1-phosphate to dihydroxyacetone phosphate (DHAP) and L-lactaldehyde. The protein is Rhamnulose-1-phosphate aldolase of Escherichia coli O157:H7.